A 478-amino-acid polypeptide reads, in one-letter code: MHHFVPDFDTDDDYVNNHNSSLNHLPRKSITTMGEDDDLMELLWQNGQVVVQNQRLHTKKPSSSPPKLLPSMDPQQQPSSDQNLFIQEDEMTSWLHYPLRDDDFCSDLLFSAAPTATATATVSQVTAARPPVSSTNESRPPVRNFMNFSRLRGDFNNGRGGESGPLLSKAVVRESTQVSPSATPSAAASESGLTRRTDGTDSSAVAGGGAYNRKGKAVAMTAPAIEITGTSSSVVSKSEIEPEKTNVDDRKRKEREATTTDETESRSEETKQARVSTTSTKRSRAAEVHNLSERKRRDRINERMKALQELIPRCNKSDKASMLDEAIEYMKSLQLQIQMMSMGCGMMPMMYPGMQQYMPHMAMGMGMNQPIPPPSFMPFPNMLAAQRPLPTQTHMAGSGPQYPVHASDPSRVFVPNQQYDPTSGQPQYPAGYTDPYQQFRGLHPTQPPQFQNQATSYPSSSRVSSSKESEDHGNHTTG.

The residue at position 10 (Thr-10) is a Phosphothreonine; by CK2. 5 disordered regions span residues 56-80, 122-144, 172-210, 230-294, and 391-478; these read LHTK…QPSS, VSQV…PVRN, VRES…GGGA, TSSS…LSER, and TQTH…HTTG. The span at 69–80 shows a compositional bias: low complexity; that stretch reads LPSMDPQQQPSS. A compositionally biased stretch (low complexity) spans 179-189; that stretch reads SPSATPSAAAS. At Thr-197 the chain carries Phosphothreonine; by CK2. Ser-202 bears the Phosphoserine; by CK2 mark. 2 stretches are compositionally biased toward basic and acidic residues: residues 238-272 and 284-294; these read SEIE…ETKQ and RAAEVHNLSER. The region spanning 284-333 is the bHLH domain; the sequence is RAAEVHNLSERKRRDRINERMKALQELIPRCNKSDKASMLDEAIEYMKSL. The span at 415–426 shows a compositional bias: polar residues; the sequence is PNQQYDPTSGQP. Phosphoserine; by CK2 occurs at positions 464, 465, 466, and 469. The span at 465-478 shows a compositional bias: basic and acidic residues; the sequence is SSKESEDHGNHTTG.

As to quaternary structure, homodimer. Interacts with the photoactivated conformer (Pfr) of phytochromes A and B, PHYA and PHYB. Also interacts with APRR1/TOC1. Binds to RGL2, RGA and FHY3 (via N-terminus). Associates to PTAC12/HMR/PAP5 which acts as a transcriptional coactivator. Binds directly to PCH1 and PCHL; this interaction facilitates its association with phyB and its subsequent light-induced degradation. In terms of processing, phosphorylated at Thr-10, Thr-197, Ser-202, Ser-464, Ser-465, Ser-466 and Ser-469 by CK2. Phosphorylated and ubiquitinated after an exposure to light (especially red and far-red), in a phytochrome-dependent manner. Modified proteins undergo a proteasome-dependent degradation. Its stability and degradation plays a central role in photomorphogenesis of seedlings. As to expression, mainly expressed in leaves, stems and seedlings, and, to a lower extent, in fruits, flowers and roots.

The protein resides in the nucleus. Its activity is regulated as follows. DNA-binding ability is inhibited by PCH1 and PCHL to negatively regulate the expressions of its target genes. In terms of biological role, transcription activator. Negatively regulates chlorophyll biosynthesis and seed germination in the dark, and lightinduced degradation of PIF1 relieves this negative regulation to promote photomorphogenesis. Binds to the G-box motif (5'-CACGTG-3') found in many light-regulated promoters. Promotes the expression of SOM, and thus modulates responses to abscisic acid (ABA) and gibberellic acid (GA). The protein is Transcription factor PIF1 of Arabidopsis thaliana (Mouse-ear cress).